Here is a 657-residue protein sequence, read N- to C-terminus: Threonine--tRNA ligase (657 aa).

The 64-residue stretch at 7-70 (DRQQVIITLP…TENARVSIIT (64 aa)) folds into the TGS domain. The catalytic stretch occupies residues 253 to 555 (DHRKLGAELG…LIEHTAGNFP (303 aa)). C351, H402, and H532 together coordinate Zn(2+).

This sequence belongs to the class-II aminoacyl-tRNA synthetase family. In terms of assembly, homodimer. Zn(2+) serves as cofactor.

The protein localises to the cytoplasm. The enzyme catalyses tRNA(Thr) + L-threonine + ATP = L-threonyl-tRNA(Thr) + AMP + diphosphate + H(+). Catalyzes the attachment of threonine to tRNA(Thr) in a two-step reaction: L-threonine is first activated by ATP to form Thr-AMP and then transferred to the acceptor end of tRNA(Thr). Also edits incorrectly charged L-seryl-tRNA(Thr). The protein is Threonine--tRNA ligase of Chlorobaculum tepidum (strain ATCC 49652 / DSM 12025 / NBRC 103806 / TLS) (Chlorobium tepidum).